The chain runs to 330 residues: Aspartate--ammonia ligase (330 aa).

It belongs to the class-II aminoacyl-tRNA synthetase family. AsnA subfamily.

The protein resides in the cytoplasm. The enzyme catalyses L-aspartate + NH4(+) + ATP = L-asparagine + AMP + diphosphate + H(+). It functions in the pathway amino-acid biosynthesis; L-asparagine biosynthesis; L-asparagine from L-aspartate (ammonia route): step 1/1. The polypeptide is Aspartate--ammonia ligase (Yersinia pseudotuberculosis serotype O:1b (strain IP 31758)).